A 349-amino-acid chain; its full sequence is Selenide, water dikinase (349 aa).

Residue cysteine 17 is part of the active site. ATP-binding positions include lysine 20 and 48 to 50 (MAD). Aspartate 51 serves as a coordination point for Mg(2+). ATP contacts are provided by residues aspartate 68, aspartate 91, and 139–141 (GHS). Residue aspartate 91 participates in Mg(2+) binding. Aspartate 227 contacts Mg(2+).

The protein belongs to the selenophosphate synthase 1 family. Class I subfamily. As to quaternary structure, homodimer. Mg(2+) is required as a cofactor.

The enzyme catalyses hydrogenselenide + ATP + H2O = selenophosphate + AMP + phosphate + 2 H(+). In terms of biological role, synthesizes selenophosphate from selenide and ATP. This Rhizobium meliloti (strain 1021) (Ensifer meliloti) protein is Selenide, water dikinase.